The primary structure comprises 565 residues: uncharacterized protein (565 aa).

10 helical membrane passes run 28-48 (IFHF…LPFA), 73-93 (ASYG…DTGL), 109-129 (VLAI…FLVW), 169-189 (LFLF…FYFI), 262-282 (IVIQ…YPVL), 315-335 (LIVT…VITS), 364-384 (SLIF…FGVI), 393-413 (VFPW…AMFI), 461-481 (AFLV…LLPL), and 526-546 (TLGL…LTFV).

Belongs to the TrkH potassium transport family.

The protein resides in the cell membrane. This is an uncharacterized protein from Mycoplasma pneumoniae (strain ATCC 29342 / M129 / Subtype 1) (Mycoplasmoides pneumoniae).